Reading from the N-terminus, the 113-residue chain is Protein Wnt-10 (113 aa).

The O-palmitoleoyl serine; by PORCN moiety is linked to residue Ser-1. Cys-79 and Cys-94 are oxidised to a cystine.

Belongs to the Wnt family. Palmitoleoylation is required for efficient binding to frizzled receptors. Depalmitoleoylation leads to Wnt signaling pathway inhibition.

The protein localises to the secreted. It is found in the extracellular space. It localises to the extracellular matrix. Ligand for members of the frizzled family of seven transmembrane receptors. Probable developmental protein. May be a signaling molecule which affects the development of discrete regions of tissues. Is likely to signal over only few cell diameters. In Eptatretus stoutii (Pacific hagfish), this protein is Protein Wnt-10 (WNT-10).